A 60-amino-acid chain; its full sequence is uncharacterized protein (60 aa).

This is an uncharacterized protein from Lepidoptera (butterflies and moths).